A 397-amino-acid polypeptide reads, in one-letter code: Chorismate synthase (397 aa).

Positions 40 and 46 each coordinate NADP(+). Residues 129–131, 257–258, Gly302, 317–321, and Arg343 contribute to the FMN site; these read RAS, QA, and KPIAT.

This sequence belongs to the chorismate synthase family. Homotetramer. FMNH2 is required as a cofactor.

The catalysed reaction is 5-O-(1-carboxyvinyl)-3-phosphoshikimate = chorismate + phosphate. It functions in the pathway metabolic intermediate biosynthesis; chorismate biosynthesis; chorismate from D-erythrose 4-phosphate and phosphoenolpyruvate: step 7/7. Its function is as follows. Catalyzes the anti-1,4-elimination of the C-3 phosphate and the C-6 proR hydrogen from 5-enolpyruvylshikimate-3-phosphate (EPSP) to yield chorismate, which is the branch point compound that serves as the starting substrate for the three terminal pathways of aromatic amino acid biosynthesis. This reaction introduces a second double bond into the aromatic ring system. This is Chorismate synthase from Prosthecochloris aestuarii (strain DSM 271 / SK 413).